A 393-amino-acid chain; its full sequence is Staphopain B (393 aa).

The signal sequence occupies residues 1 to 36; that stretch reads MNSSYKSRVFNIISIIMVSMLILSLGAFANNNKAKA. A propeptide spanning residues 37–219 is cleaved from the precursor; that stretch reads DSHSKQLEIN…KVEENEAIQE (183 aa). Catalysis depends on residues Cys243, His340, and Asn360.

The protein belongs to the peptidase C47 family. In the cytoplasm, prematurely activated/folded SspB forms a stable non-covalent complex with SspC. Proteolytically cleaved by staphylococcal serine protease (SspA).

It localises to the secreted. With respect to regulation, prematurely activated/folded staphopain B is inhibited by staphostatin B (SspC), which is probably required to protect staphylococcal cytoplasmic proteins from degradation by SspB. Functionally, cysteine protease that plays an important role in the inhibition of host innate immune response. Degrades host elastin, fibrogen, fibronectin and kininogen. Blocks phagocytosis of opsonised S.aureus by neutrophils and monocytes by inducing their death in a proteolytic activity-dependent manner. Decreases surface expression of the 'don't eat me' signal CD31 on neutrophils. Cleaves host galectin-3/LGALS3, thereby inhibiting the neutrophil-activating ability of the lectin. The chain is Staphopain B (sspB) from Staphylococcus aureus (strain MSSA476).